We begin with the raw amino-acid sequence, 291 residues long: Segregation and condensation protein A (291 aa).

It belongs to the ScpA family. In terms of assembly, component of a cohesin-like complex composed of ScpA, ScpB and the Smc homodimer, in which ScpA and ScpB bind to the head domain of Smc. The presence of the three proteins is required for the association of the complex with DNA.

The protein localises to the cytoplasm. Functionally, participates in chromosomal partition during cell division. May act via the formation of a condensin-like complex containing Smc and ScpB that pull DNA away from mid-cell into both cell halves. The protein is Segregation and condensation protein A of Malacoplasma penetrans (strain HF-2) (Mycoplasma penetrans).